The primary structure comprises 394 residues: 1-deoxy-D-xylulose 5-phosphate reductoisomerase (394 aa).

NADPH contacts are provided by threonine 10, glycine 11, serine 12, isoleucine 13, asparagine 38, and asparagine 125. Lysine 126 serves as a coordination point for 1-deoxy-D-xylulose 5-phosphate. Glutamate 127 serves as a coordination point for NADPH. A Mn(2+)-binding site is contributed by aspartate 151. 1-deoxy-D-xylulose 5-phosphate is bound by residues serine 152, glutamate 153, serine 182, and histidine 205. Glutamate 153 contacts Mn(2+). Position 211 (glycine 211) interacts with NADPH. Positions 218, 223, 224, and 227 each coordinate 1-deoxy-D-xylulose 5-phosphate. Glutamate 227 contributes to the Mn(2+) binding site.

It belongs to the DXR family. Mg(2+) is required as a cofactor. It depends on Mn(2+) as a cofactor.

It carries out the reaction 2-C-methyl-D-erythritol 4-phosphate + NADP(+) = 1-deoxy-D-xylulose 5-phosphate + NADPH + H(+). It functions in the pathway isoprenoid biosynthesis; isopentenyl diphosphate biosynthesis via DXP pathway; isopentenyl diphosphate from 1-deoxy-D-xylulose 5-phosphate: step 1/6. In terms of biological role, catalyzes the NADPH-dependent rearrangement and reduction of 1-deoxy-D-xylulose-5-phosphate (DXP) to 2-C-methyl-D-erythritol 4-phosphate (MEP). The protein is 1-deoxy-D-xylulose 5-phosphate reductoisomerase of Methylococcus capsulatus (strain ATCC 33009 / NCIMB 11132 / Bath).